A 632-amino-acid polypeptide reads, in one-letter code: Serine/threonine-protein kinase plk-2 (632 aa).

Positions 1 to 26 (MQRVQPSAARVKSQKKEKAPPDVPDV) are disordered. Residues 36-287 (YEKGKFLGKG…ARAVCRDHFF (252 aa)) form the Protein kinase domain. ATP contacts are provided by residues 42–50 (LGKGGFAHC) and K65. The active-site Proton acceptor is the D159. Positions 313 to 334 (AEENVSPSGTIDQRGPHQAGRS) are disordered. POLO box domains lie at 405–484 (WISK…YMND) and 506–588 (TLRV…RLVE).

It belongs to the protein kinase superfamily. Ser/Thr protein kinase family. CDC5/Polo subfamily. Interacts (via POLO box domain) with mex-5 and mex-6. Interacts (via POLO box domain) with him-8 (via N-terminus); the interaction mediates plk-2 recruitment to the pairing region of X chromosomes during meiosis. Interacts with sun-1. May interact with nicotinic acetylcholine receptor. The cofactor is Mg(2+). As to expression, expressed in oocytes.

Its subcellular location is the nucleus. It is found in the cytoplasm. The protein resides in the cytoskeleton. It localises to the microtubule organizing center. The protein localises to the centrosome. Its subcellular location is the chromosome. It is found in the centromere. The protein resides in the kinetochore. The enzyme catalyses L-seryl-[protein] + ATP = O-phospho-L-seryl-[protein] + ADP + H(+). The catalysed reaction is L-threonyl-[protein] + ATP = O-phospho-L-threonyl-[protein] + ADP + H(+). Functionally, serine/threonine-protein kinase which plays a role, during oogenesis, in chromosome pairing and synapsis, by facilitating the recruitment and attachment of meiotic chromosomes to the nuclear envelope during prophase. Promotes the localization of brc-1 to the short arm of homologous chromosomes during meiotic prophase I. Regulates the formation of sun-1 patches along the nuclear envelope. Promotes meiotic nuclei apoptosis in response to chromosomal asynapsis. Plays a redundant role with plk-1 in the establishment of cell polarity downstream of mex-5 and mex-6 during the first embryonic cell divisions. Plays a role in nicotinic acetylcholine receptor-mediated sensitivity to nicotine but not levamisole. Regulates motility. This is Serine/threonine-protein kinase plk-2 from Caenorhabditis elegans.